We begin with the raw amino-acid sequence, 211 residues long: Thiamine-phosphate synthase (211 aa).

Residues 37–41 (QLRIK) and Asn69 contribute to the 4-amino-2-methyl-5-(diphosphooxymethyl)pyrimidine site. Mg(2+) is bound by residues Asp70 and Asp89. Ser108 is a binding site for 4-amino-2-methyl-5-(diphosphooxymethyl)pyrimidine. 134 to 136 (TQT) is a binding site for 2-[(2R,5Z)-2-carboxy-4-methylthiazol-5(2H)-ylidene]ethyl phosphate. Lys137 contributes to the 4-amino-2-methyl-5-(diphosphooxymethyl)pyrimidine binding site. Residues Gly166 and 186 to 187 (VS) each bind 2-[(2R,5Z)-2-carboxy-4-methylthiazol-5(2H)-ylidene]ethyl phosphate.

This sequence belongs to the thiamine-phosphate synthase family. The cofactor is Mg(2+).

It carries out the reaction 2-[(2R,5Z)-2-carboxy-4-methylthiazol-5(2H)-ylidene]ethyl phosphate + 4-amino-2-methyl-5-(diphosphooxymethyl)pyrimidine + 2 H(+) = thiamine phosphate + CO2 + diphosphate. The catalysed reaction is 2-(2-carboxy-4-methylthiazol-5-yl)ethyl phosphate + 4-amino-2-methyl-5-(diphosphooxymethyl)pyrimidine + 2 H(+) = thiamine phosphate + CO2 + diphosphate. It catalyses the reaction 4-methyl-5-(2-phosphooxyethyl)-thiazole + 4-amino-2-methyl-5-(diphosphooxymethyl)pyrimidine + H(+) = thiamine phosphate + diphosphate. It functions in the pathway cofactor biosynthesis; thiamine diphosphate biosynthesis; thiamine phosphate from 4-amino-2-methyl-5-diphosphomethylpyrimidine and 4-methyl-5-(2-phosphoethyl)-thiazole: step 1/1. Condenses 4-methyl-5-(beta-hydroxyethyl)thiazole monophosphate (THZ-P) and 2-methyl-4-amino-5-hydroxymethyl pyrimidine pyrophosphate (HMP-PP) to form thiamine monophosphate (TMP). The chain is Thiamine-phosphate synthase from Salmonella schwarzengrund (strain CVM19633).